A 407-amino-acid polypeptide reads, in one-letter code: Probable 2,3-bisphosphoglycerate-independent phosphoglycerate mutase (407 aa).

The segment at 175 to 200 (GSDAINDTDPQQVGKEPLEPKGENPN) is disordered.

It belongs to the BPG-independent phosphoglycerate mutase family. A-PGAM subfamily.

It catalyses the reaction (2R)-2-phosphoglycerate = (2R)-3-phosphoglycerate. The protein operates within carbohydrate degradation; glycolysis; pyruvate from D-glyceraldehyde 3-phosphate: step 3/5. Catalyzes the interconversion of 2-phosphoglycerate and 3-phosphoglycerate. This Aquifex aeolicus (strain VF5) protein is Probable 2,3-bisphosphoglycerate-independent phosphoglycerate mutase.